We begin with the raw amino-acid sequence, 476 residues long: Aspartyl/glutamyl-tRNA(Asn/Gln) amidotransferase subunit B (476 aa).

This sequence belongs to the GatB/GatE family. GatB subfamily. Heterotrimer of A, B and C subunits.

The enzyme catalyses L-glutamyl-tRNA(Gln) + L-glutamine + ATP + H2O = L-glutaminyl-tRNA(Gln) + L-glutamate + ADP + phosphate + H(+). The catalysed reaction is L-aspartyl-tRNA(Asn) + L-glutamine + ATP + H2O = L-asparaginyl-tRNA(Asn) + L-glutamate + ADP + phosphate + 2 H(+). Its function is as follows. Allows the formation of correctly charged Asn-tRNA(Asn) or Gln-tRNA(Gln) through the transamidation of misacylated Asp-tRNA(Asn) or Glu-tRNA(Gln) in organisms which lack either or both of asparaginyl-tRNA or glutaminyl-tRNA synthetases. The reaction takes place in the presence of glutamine and ATP through an activated phospho-Asp-tRNA(Asn) or phospho-Glu-tRNA(Gln). The protein is Aspartyl/glutamyl-tRNA(Asn/Gln) amidotransferase subunit B of Laribacter hongkongensis (strain HLHK9).